We begin with the raw amino-acid sequence, 160 residues long: MSQSDDRIVRIDLDGASMGPGDVNADHERRVAIADLLEGNRFRPDGEVDGPYALRLAIEHDRLVFDVRLEDDTPVHGFMFALGPLRRIVKDYFLICESYYEAVRDAPLERIEAIDMARRGVHNEGSTLLRERLVGKIDVDFDTARRLFTLICALHRRAAS.

This sequence belongs to the UPF0262 family.

The sequence is that of UPF0262 protein Mmar10_1128 from Maricaulis maris (strain MCS10) (Caulobacter maris).